The sequence spans 1173 residues: Pumilio homolog 2 (1173 aa).

Disordered stretches follow at residues 41–68 (VSSAGQAHGNNPHAMPPGAPSAQVPLSG), 265–296 (VSKLNGRGLPNGIESDCKDFNRTPGSRQASPT), 480–518 (QQAATQASQGQQQVMRATSNQRPLTPNQAQQGQQPESLA), 592–662 (LTGA…SLGF), and 730–759 (PISMPLPSQTSGHSLTPPPSLSSHGSSSSL). Positions 287–296 (TPGSRQASPT) are enriched in polar residues. Residues 480 to 492 (QQAATQASQGQQQ) show a composition bias toward low complexity. Residues 493–518 (VMRATSNQRPLTPNQAQQGQQPESLA) show a composition bias toward polar residues. The span at 606–622 (QQQQQQQQQQHQQQQQQ) shows a compositional bias: low complexity. Polar residues predominate over residues 623–633 (PNANLHSNSFY). Low complexity predominate over residues 634-657 (GNSTMSNNSQSSSLFSPGPGQPGS). A PUM-HD domain is found at 815 to 1155 (GRSRLLEDFR…HILAKLEKYY (341 aa)). Pumilio repeat units lie at residues 835-870 (DLMGHIVEFSQDQHGSRFIQQKLERASPAERQLVFS), 871-906 (EILQAAYQLMTDVFGNYVIQKFFEFGSMDQKLALAT), 907-942 (RIRGHVLPLALQMYGCRVIQKALESISTDQQSEMVR), 943-978 (ELDGHVLKCVKDQNGNHVVQKCIECVTPQSLHFIIE), 979-1014 (AFKGQVYVLSTHPYGCRVIQRILEHCTPEQTLPILE), 1015-1050 (ELHQSTEQLVQDQYGNYVIQHVLEHGRSDDKSKIVC), 1051-1086 (EVRGQVLVLSQHKFASNVVEKCVTHSSRTERAFLID), 1087-1129 (EICC…IIMH), and 1130-1167 (KIRPHITTLRKYTYGKHILAKLEKYYMKNSPDLGLLVG). Residues 850–854 (SRFIQ) are adenine-nucleotide binding in RNA target. The interval 886–890 (NYVIQ) is uracil-nucleotide binding in RNA target. Positions 922-926 (CRVIQ) are adenine-nucleotide binding in RNA target. The non-specific-nucleotide binding in RNA target stretch occupies residues 958–962 (NHVVQ). An adenine-nucleotide binding in RNA target region spans residues 994-998 (CRVIQ). Positions 1030-1034 (NYVIQ) are uracil-nucleotide binding in RNA target. Residues 1066–1070 (SNVVE) are guanine-nucleotide binding in RNA target. Positions 1109 to 1113 (NYVVQ) are uracil-nucleotide binding in RNA target.

As to quaternary structure, component of a complex with papd4, sympk, tacc3, parn, dazl and cpeb1. In terms of processing, phosphorylated.

It localises to the cytoplasm. Its subcellular location is the P-body. It is found in the cytoplasmic granule. Sequence-specific RNA-binding protein that acts as a post-transcriptional repressor by binding the 3'-UTR of mRNA targets. Binds to an RNA consensus sequence, the Pumilio Response Element (PRE), 5'-UGUANAUA-3', that is related to the Nanos Response Element (NRE). Mediates post-transcriptional repression of transcripts via different mechanisms: acts via direct recruitment of deadenylase complexes leading to translational inhibition and mRNA degradation. Also mediates deadenylation-independent repression by promoting accessibility of miRNAs. The protein is Pumilio homolog 2 (pum2) of Xenopus laevis (African clawed frog).